The following is a 296-amino-acid chain: Nucleotide-binding protein SAG0531 (296 aa).

13-20 (GMSGAGKT) contacts ATP. Residue 63–66 (DMRS) coordinates GTP.

It belongs to the RapZ-like family.

Functionally, displays ATPase and GTPase activities. This is Nucleotide-binding protein SAG0531 from Streptococcus agalactiae serotype V (strain ATCC BAA-611 / 2603 V/R).